Reading from the N-terminus, the 314-residue chain is Olfactory receptor 8D4 (314 aa).

The Extracellular portion of the chain corresponds to 1–25; sequence MGVKNHSTVTEFLLSGLTEQAELQL. Residue N5 is glycosylated (N-linked (GlcNAc...) asparagine). Residues 26–46 form a helical membrane-spanning segment; it reads PLFCLFLGIYTVTVVGNLSMI. The Cytoplasmic portion of the chain corresponds to 47–54; sequence SIIRLNRQ. A helical transmembrane segment spans residues 55–75; the sequence is LHTPMYYFLSSLSFLDFCYSS. At 76–99 the chain is on the extracellular side; the sequence is VITPKMLSGFLCRDRSISYSGCMI. A disulfide bridge links C97 with C189. Residues 100–120 traverse the membrane as a helical segment; it reads QLFFFCVCVISECYMLAAMAC. The Cytoplasmic portion of the chain corresponds to 121-139; it reads DRYVAICSPLLYRVIMSPR. Residues 140 to 160 traverse the membrane as a helical segment; that stretch reads VCSLLVAAVFSVGFTDAVIHG. Residues 161–197 are Extracellular-facing; that stretch reads GCILRLSFCGSNIIKHYFCDIVPLIKLSCSSTYIDEL. A helical transmembrane segment spans residues 198 to 217; the sequence is LIFVIGGFNMVATSLTIIIS. Residues 218-237 lie on the Cytoplasmic side of the membrane; it reads YAFILTSILRIHSKKGRCKA. A helical transmembrane segment spans residues 238 to 258; it reads FSTCSSHLTAVLMFYGSLMSM. At 259-271 the chain is on the extracellular side; sequence YLKPASSSSLTQE. The chain crosses the membrane as a helical span at residues 272-292; sequence KVSSVFYTTVILMLNPLIYSL. Over 293–314 the chain is Cytoplasmic; the sequence is RNNEVRNALMKLLRRKISLSPG.

Belongs to the G-protein coupled receptor 1 family.

The protein resides in the cell membrane. Its function is as follows. Odorant receptor. This Homo sapiens (Human) protein is Olfactory receptor 8D4 (OR8D4).